Here is a 1391-residue protein sequence, read N- to C-terminus: Nuclear pore complex protein Nup155 (1391 aa).

Ser-526 is a glycosylation site (O-linked (GlcNAc) serine). Disordered stretches follow at residues 604 to 630 (SSSP…AQPP) and 985 to 1012 (QSKA…NMLS). Residue Ser-1057 is modified to Phosphoserine.

The protein belongs to the non-repetitive/WGA-negative nucleoporin family. In terms of assembly, interacts with GLE1 and NUP35/NUP53. Able to form a heterotrimer with GLE1 and NUP42 in vitro. Forms a complex with NUP35, NUP93, NUP205 and lamin B. Phosphorylated. Phosphorylation and dephosphorylation may be important for the function of NUP155 and may play a role in the reversible disassembly of the nuclear pore complex during mitosis. In terms of processing, disulfide-linked to NUP62. The inner channel of the NPC has a different redox environment from the cytoplasm and allows the formation of interchain disulfide bonds between some nucleoporins, the significant increase of these linkages upon oxidative stress reduces the permeability of the NPC.

It is found in the nucleus. The protein resides in the nuclear pore complex. Its subcellular location is the nucleus membrane. Essential component of nuclear pore complex. Could be essessential for embryogenesis. Nucleoporins may be involved both in binding and translocating proteins during nucleocytoplasmic transport. This is Nuclear pore complex protein Nup155 (Nup155) from Mus musculus (Mouse).